The primary structure comprises 195 residues: Cysteine/O-acetylserine efflux protein (195 aa).

Over 1 to 7 (MTPTLLS) the chain is Periplasmic. The chain crosses the membrane as a helical span at residues 8 to 28 (AFWTYTLITAMTPGPNNILAL). Over 29–46 (SSATSHGFRQSTRVLAGM) the chain is Cytoplasmic. Residues 47–67 (SLGFLIVMLLCAGISFSLAVI) form a helical membrane-spanning segment. The Periplasmic portion of the chain corresponds to 68–69 (DP). The chain crosses the membrane as a helical span at residues 70–90 (AAVHLLSWAGAAYIVWLAWKI). Residues 91–104 (ATSPTKEDGLQAKP) are Cytoplasmic-facing. Residues 105–125 (ISFWASFALQFVNVKIILYGV) traverse the membrane as a helical segment. Residues 126-141 (TALSTFVLPQTQALSW) lie on the Periplasmic side of the membrane. The helical transmembrane segment at 142 to 162 (VVGVSVLLAMIGTFGNVCWAL) threads the bilayer. The Cytoplasmic segment spans residues 163–176 (AGHLFQRLFRQYGR). A helical membrane pass occupies residues 177–194 (QLNIVLALLLVYCAVRIF). Tyrosine 195 is a topological domain (periplasmic).

It belongs to the Rht family.

Its subcellular location is the cell inner membrane. It carries out the reaction O-acetyl-L-serine(in) = O-acetyl-L-serine(out). It catalyses the reaction L-cysteine(in) = L-cysteine(out). In terms of biological role, exporter of O-acetylserine (OAS) and cysteine. This Escherichia coli O9:H4 (strain HS) protein is Cysteine/O-acetylserine efflux protein (eamB).